The sequence spans 127 residues: Aspartate 1-decarboxylase (127 aa).

S25 acts as the Schiff-base intermediate with substrate; via pyruvic acid in catalysis. Residue S25 is modified to Pyruvic acid (Ser). Position 57 (T57) interacts with substrate. Y58 functions as the Proton donor in the catalytic mechanism. Residue 73 to 75 (GAA) coordinates substrate.

The protein belongs to the PanD family. Heterooctamer of four alpha and four beta subunits. Pyruvate serves as cofactor. Is synthesized initially as an inactive proenzyme, which is activated by self-cleavage at a specific serine bond to produce a beta-subunit with a hydroxyl group at its C-terminus and an alpha-subunit with a pyruvoyl group at its N-terminus.

It is found in the cytoplasm. It carries out the reaction L-aspartate + H(+) = beta-alanine + CO2. The protein operates within cofactor biosynthesis; (R)-pantothenate biosynthesis; beta-alanine from L-aspartate: step 1/1. In terms of biological role, catalyzes the pyruvoyl-dependent decarboxylation of aspartate to produce beta-alanine. This Neisseria meningitidis serogroup C / serotype 2a (strain ATCC 700532 / DSM 15464 / FAM18) protein is Aspartate 1-decarboxylase.